Here is a 253-residue protein sequence, read N- to C-terminus: Sulfate transporter CysZ (253 aa).

4 consecutive transmembrane segments (helical) span residues 31 to 51 (FVIL…WWLF), 72 to 92 (LSYL…GYFF), 151 to 171 (IVLL…PVLW), and 222 to 242 (IPVL…AMWV).

Belongs to the CysZ family.

It is found in the cell inner membrane. Its function is as follows. High affinity, high specificity proton-dependent sulfate transporter, which mediates sulfate uptake. Provides the sulfur source for the cysteine synthesis pathway. This is Sulfate transporter CysZ from Salmonella paratyphi A (strain AKU_12601).